The primary structure comprises 359 residues: Insulin gene enhancer protein ISL-2 (359 aa).

LIM zinc-binding domains lie at alanine 25–glycine 86 and isoleucine 87–arginine 149. The disordered stretch occupies residues alanine 151–lysine 190. A phosphoserine mark is found at serine 154 and serine 157. Positions threonine 191 to serine 250 form a DNA-binding region, homeobox. The LIM-binding domain (LID) stretch occupies residues glycine 272–tryptophan 301. Serine 279 carries the phosphoserine modification. The segment covering glutamate 326–serine 336 has biased composition (low complexity). The disordered stretch occupies residues glutamate 326–threonine 359. Residues aspartate 337 to threonine 359 are compositionally biased toward polar residues.

In terms of assembly, interacts with LHX4.

It is found in the nucleus. Its function is as follows. Transcriptional factor that defines subclasses of motoneurons that segregate into columns in the spinal cord and select distinct axon pathways. This chain is Insulin gene enhancer protein ISL-2 (Isl2), found in Mus musculus (Mouse).